The chain runs to 243 residues: DNA repair protein RecO (243 aa).

This sequence belongs to the RecO family.

Its function is as follows. Involved in DNA repair and RecF pathway recombination. This Caulobacter sp. (strain K31) protein is DNA repair protein RecO.